Consider the following 415-residue polypeptide: uncharacterized protein (415 aa).

Cysteine 85, cysteine 91, cysteine 94, and cysteine 175 together coordinate [4Fe-4S] cluster. S-adenosyl-L-methionine is bound by residues glutamine 248, tyrosine 276, glutamate 297, and asparagine 344. Residue cysteine 371 is the Nucleophile of the active site.

The protein belongs to the class I-like SAM-binding methyltransferase superfamily. RNA M5U methyltransferase family.

This is an uncharacterized protein from Leptospira interrogans serogroup Icterohaemorrhagiae serovar Lai (strain 56601).